The following is a 487-amino-acid chain: Variant surface glycoprotein WRATAT B (487 aa).

The N-terminal stretch at 1 to 19 (MWIILALLTLAGSRVAHGA) is a signal peptide. N71, N84, N418, and N465 each carry an N-linked (GlcNAc...) asparagine glycan. The disordered stretch occupies residues 443–468 (KPKAGTEAATTGPGERDAGATANTTG). A lipid anchor (GPI-anchor amidated serine) is attached at S470. The propeptide at 471–487 (NSFVIKTSPLLFAFLLF) is removed in mature form.

Its subcellular location is the cell membrane. VSG forms a coat on the surface of the parasite. The trypanosome evades the immune response of the host by expressing a series of antigenically distinct VSGs from an estimated 1000 VSG genes. In Trypanosoma brucei rhodesiense, this protein is Variant surface glycoprotein WRATAT B.